Reading from the N-terminus, the 556-residue chain is Potassium-transporting ATPase potassium-binding subunit (556 aa).

10 consecutive transmembrane segments (helical) span residues 5–25, 65–85, 133–153, 176–196, 249–269, 283–303, 377–397, 415–435, 483–503, and 526–546; these read LAGILFLASLVIALVAVHVPL, SVLAFSAVSLLFLFILQLVQG, GLAVQNFVSAAVGMAVAIALV, IRILLPISVIAAILLITGGAI, PTTWTNWIEIFLLLVIAFSLP, YAIVGVQAVLAVISWSATLFF, AGLYGILILAVITVFVAGLMV, LAATYFLVTPLIVLTGTAVAM, ALGLAMVFGRFLPIILALALA, and FVGMVAGVTLILVALTFLPML.

The protein belongs to the KdpA family. In terms of assembly, the system is composed of three essential subunits: KdpA, KdpB and KdpC.

It is found in the cell membrane. In terms of biological role, part of the high-affinity ATP-driven potassium transport (or Kdp) system, which catalyzes the hydrolysis of ATP coupled with the electrogenic transport of potassium into the cytoplasm. This subunit binds the extracellular potassium ions and delivers the ions to the membrane domain of KdpB through an intramembrane tunnel. The polypeptide is Potassium-transporting ATPase potassium-binding subunit (Mycolicibacterium vanbaalenii (strain DSM 7251 / JCM 13017 / BCRC 16820 / KCTC 9966 / NRRL B-24157 / PYR-1) (Mycobacterium vanbaalenii)).